The primary structure comprises 99 residues: Integration host factor subunit alpha (99 aa).

The disordered stretch occupies residues 49-70 (FGNFDLRDKNQRPGRNPKTGED).

Belongs to the bacterial histone-like protein family. Heterodimer of an alpha and a beta chain.

Functionally, this protein is one of the two subunits of integration host factor, a specific DNA-binding protein that functions in genetic recombination as well as in transcriptional and translational control. This is Integration host factor subunit alpha from Cronobacter sakazakii (strain ATCC BAA-894) (Enterobacter sakazakii).